We begin with the raw amino-acid sequence, 113 residues long: U11-theraphotoxin-Hhn1m (113 aa).

The signal sequence occupies residues 1–21; sequence MNTVRGTFLLVFGLAASLGQA. Positions 22-74 are excised as a propeptide; the sequence is DKNENRREMQKKTEQGKSYLNFAENLLLQKLEELEAKLLEKHSKKSKNSRQKR. Cystine bridges form between cysteine 75/cysteine 90, cysteine 82/cysteine 95, and cysteine 89/cysteine 110.

This sequence belongs to the neurotoxin 14 (magi-1) family. 01 (HNTX-16) subfamily. Expressed by the venom gland.

The protein resides in the secreted. In terms of biological role, probable ion channel inhibitor. This Cyriopagopus hainanus (Chinese bird spider) protein is U11-theraphotoxin-Hhn1m.